A 357-amino-acid polypeptide reads, in one-letter code: 3-dehydroquinate synthase (357 aa).

Residues 99 to 103, 123 to 124, lysine 135, lysine 144, and 162 to 165 each bind NAD(+); these read GATGD, TT, and FLET. Zn(2+) contacts are provided by glutamate 177, histidine 247, and histidine 261.

It belongs to the sugar phosphate cyclases superfamily. Dehydroquinate synthase family. Co(2+) serves as cofactor. Zn(2+) is required as a cofactor. It depends on NAD(+) as a cofactor.

It localises to the cytoplasm. The enzyme catalyses 7-phospho-2-dehydro-3-deoxy-D-arabino-heptonate = 3-dehydroquinate + phosphate. The protein operates within metabolic intermediate biosynthesis; chorismate biosynthesis; chorismate from D-erythrose 4-phosphate and phosphoenolpyruvate: step 2/7. Its function is as follows. Catalyzes the conversion of 3-deoxy-D-arabino-heptulosonate 7-phosphate (DAHP) to dehydroquinate (DHQ). In Macrococcus caseolyticus (strain JCSC5402) (Macrococcoides caseolyticum), this protein is 3-dehydroquinate synthase.